We begin with the raw amino-acid sequence, 280 residues long: 2-dehydro-3-deoxyphosphooctonate aldolase (280 aa).

Belongs to the KdsA family.

The protein localises to the cytoplasm. The catalysed reaction is D-arabinose 5-phosphate + phosphoenolpyruvate + H2O = 3-deoxy-alpha-D-manno-2-octulosonate-8-phosphate + phosphate. Its pathway is carbohydrate biosynthesis; 3-deoxy-D-manno-octulosonate biosynthesis; 3-deoxy-D-manno-octulosonate from D-ribulose 5-phosphate: step 2/3. The protein operates within bacterial outer membrane biogenesis; lipopolysaccharide biosynthesis. The chain is 2-dehydro-3-deoxyphosphooctonate aldolase from Coxiella burnetii (strain CbuG_Q212) (Coxiella burnetii (strain Q212)).